Reading from the N-terminus, the 155-residue chain is Small ribosomal subunit protein uS7c (155 aa).

The protein belongs to the universal ribosomal protein uS7 family. In terms of assembly, part of the 30S ribosomal subunit.

The protein localises to the plastid. The protein resides in the chloroplast. Its function is as follows. One of the primary rRNA binding proteins, it binds directly to 16S rRNA where it nucleates assembly of the head domain of the 30S subunit. The protein is Small ribosomal subunit protein uS7c (rps7) of Coelogyne cristata (Orchid).